A 375-amino-acid polypeptide reads, in one-letter code: Alcohol dehydrogenase 1 (375 aa).

The residue at position 2 (Ser-2) is an N-acetylserine. Positions 47, 68, 98, 101, 104, 112, and 175 each coordinate Zn(2+). NAD(+)-binding positions include 200 to 205, Asp-224, and Lys-229; that span reads GLGGVG. Position 234 is an N6-succinyllysine (Lys-234). 293–295 contacts NAD(+); the sequence is VGV. Residue Lys-340 is modified to N6-succinyllysine. Residue Arg-370 coordinates NAD(+).

The protein belongs to the zinc-containing alcohol dehydrogenase family. Class-I subfamily. Zn(2+) serves as cofactor.

The protein localises to the cytoplasm. The enzyme catalyses a primary alcohol + NAD(+) = an aldehyde + NADH + H(+). It catalyses the reaction a secondary alcohol + NAD(+) = a ketone + NADH + H(+). This chain is Alcohol dehydrogenase 1 (ADH1), found in Peromyscus maniculatus (North American deer mouse).